The sequence spans 737 residues: tRNA-dihydrouridine(47) synthase [NAD(P)(+)] (737 aa).

Basic and acidic residues-rich tracts occupy residues 1-11 (MESQETAKRPI) and 24-33 (PATKRVKLDD). Residues 1–127 (MESQETAKRP…GKKKRPKGQN (127 aa)) form a disordered region. Low complexity predominate over residues 35–44 (PVPQIQEEPS). Residues 57 to 82 (EDEKPTEQRQDDRDKRRGIAPIKKEY) show a composition bias toward basic and acidic residues. C3H1-type zinc fingers lie at residues 142–166 (CNSVAWTPEFSPRHCKHGERCNALH) and 187–208 (CPVWETHGKCSSGWRCLFVESH). FMN is bound by residues 332 to 334 (PLT) and Gln-407. The active-site Proton donor is Cys-439. FMN is bound by residues Lys-479, His-520, 577–579 (NGD), and 601–602 (GR).

Belongs to the Dus family. Dus3 subfamily. The cofactor is FMN.

The protein localises to the cytoplasm. Its subcellular location is the nucleus. It carries out the reaction 5,6-dihydrouridine(47) in tRNA + NAD(+) = uridine(47) in tRNA + NADH + H(+). The enzyme catalyses 5,6-dihydrouridine(47) in tRNA + NADP(+) = uridine(47) in tRNA + NADPH + H(+). The catalysed reaction is a 5,6-dihydrouridine in mRNA + NAD(+) = a uridine in mRNA + NADH + H(+). It catalyses the reaction a 5,6-dihydrouridine in mRNA + NADP(+) = a uridine in mRNA + NADPH + H(+). In terms of biological role, catalyzes the synthesis of dihydrouridine, a modified base found in the D-loop of most tRNAs. Specifically modifies U47 in cytoplasmic tRNAs. Catalyzes the synthesis of dihydrouridine in some mRNAs, thereby affecting their translation. The polypeptide is tRNA-dihydrouridine(47) synthase [NAD(P)(+)] (dus-3) (Neurospora crassa (strain ATCC 24698 / 74-OR23-1A / CBS 708.71 / DSM 1257 / FGSC 987)).